The primary structure comprises 230 residues: DNA mismatch repair protein MutH (230 aa).

The protein belongs to the MutH family.

It localises to the cytoplasm. Sequence-specific endonuclease that cleaves unmethylated GATC sequences. It is involved in DNA mismatch repair. In Citrobacter koseri (strain ATCC BAA-895 / CDC 4225-83 / SGSC4696), this protein is DNA mismatch repair protein MutH.